Consider the following 231-residue polypeptide: Putative cobalt transport protein CbiM 1 (231 aa).

A run of 6 helical transmembrane segments spans residues 8–28 (LPLQ…AYGI), 41–61 (TLPL…LKMP), 74–94 (GLGA…IVLV), 97–117 (ALFL…SMGI), 138–158 (IVNV…ITSI), and 175–195 (FITF…IEGI).

The protein belongs to the CbiM family. As to quaternary structure, forms an energy-coupling factor (ECF) transporter complex composed of an ATP-binding protein (A component, CbiO), a transmembrane protein (T component, CbiQ) and 2 possible substrate-capture proteins (S components, CbiM and CbiN) of unknown stoichimetry.

The protein localises to the cell membrane. It participates in cofactor biosynthesis; adenosylcobalamin biosynthesis. Part of the energy-coupling factor (ECF) transporter complex CbiMNOQ involved in cobalt import. In Methanosphaerula palustris (strain ATCC BAA-1556 / DSM 19958 / E1-9c), this protein is Putative cobalt transport protein CbiM 1.